A 463-amino-acid chain; its full sequence is Glycine--tRNA ligase (463 aa).

Substrate-binding residues include Arg-102 and Glu-165. Residues 197–199 (RNE), 207–212 (FRTREF), 284–285 (EL), and 328–331 (GLTR) each bind ATP. 212–216 (FEQME) contributes to the substrate binding site. 324–328 (EPAAG) lines the substrate pocket.

Belongs to the class-II aminoacyl-tRNA synthetase family. As to quaternary structure, homodimer.

The protein resides in the cytoplasm. The enzyme catalyses tRNA(Gly) + glycine + ATP = glycyl-tRNA(Gly) + AMP + diphosphate. Functionally, catalyzes the attachment of glycine to tRNA(Gly). The protein is Glycine--tRNA ligase of Mycobacterium bovis (strain ATCC BAA-935 / AF2122/97).